Consider the following 598-residue polypeptide: Beta-galactosidase (598 aa).

The N-terminal stretch at 1–21 is a signal peptide; the sequence is MLRTTLAPLVLALALALPAAA. The active-site Proton donor is the Glu184. Glu260 serves as the catalytic Nucleophile.

This sequence belongs to the glycosyl hydrolase 35 family.

It carries out the reaction Hydrolysis of terminal non-reducing beta-D-galactose residues in beta-D-galactosides.. Functionally, preferentially hydrolyzes beta(1-&gt;3) galactosyl linkages over beta(1-&gt;4) linkages. This chain is Beta-galactosidase (bga), found in Xanthomonas manihotis.